The following is a 217-amino-acid chain: Lipoprotein CseA (217 aa).

The first 34 residues, 1-34 (MRGLGTESLRARGALKAAIAAVAGLAVLGLSVSA), serve as a signal peptide directing secretion. Residue Cys-35 is the site of N-palmitoyl cysteine attachment. A lipid anchor (S-diacylglycerol cysteine) is attached at Cys-35. 2 disordered regions span residues 39–66 (GTGA…SPSK) and 192–217 (FSEE…PAPN).

The protein resides in the cell membrane. In terms of biological role, may be involved in the stabilization of the cell envelope or may interact with the sensor protein CseC to modulate its activity, in response to cell envelope stress. The polypeptide is Lipoprotein CseA (cseA) (Streptomyces avermitilis (strain ATCC 31267 / DSM 46492 / JCM 5070 / NBRC 14893 / NCIMB 12804 / NRRL 8165 / MA-4680)).